The sequence spans 55 residues: Large ribosomal subunit protein bL33 (55 aa).

Belongs to the bacterial ribosomal protein bL33 family.

The polypeptide is Large ribosomal subunit protein bL33 (Aeromonas hydrophila subsp. hydrophila (strain ATCC 7966 / DSM 30187 / BCRC 13018 / CCUG 14551 / JCM 1027 / KCTC 2358 / NCIMB 9240 / NCTC 8049)).